The primary structure comprises 79 residues: uncharacterized protein (79 aa).

A disordered region spans residues 20–52; sequence TERGAGLSPAAPPDPSPAIAPTMAEGGVPSPGP.

This is an uncharacterized protein from Homo sapiens (Human).